The primary structure comprises 118 residues: Large ribosomal subunit protein uL18 (118 aa).

Belongs to the universal ribosomal protein uL18 family. As to quaternary structure, part of the 50S ribosomal subunit; part of the 5S rRNA/L5/L18/L25 subcomplex. Contacts the 5S and 23S rRNAs.

Its function is as follows. This is one of the proteins that bind and probably mediate the attachment of the 5S RNA into the large ribosomal subunit, where it forms part of the central protuberance. This is Large ribosomal subunit protein uL18 from Phenylobacterium zucineum (strain HLK1).